A 361-amino-acid polypeptide reads, in one-letter code: Phosphoserine aminotransferase (361 aa).

L-glutamate is bound at residue R43. Pyridoxal 5'-phosphate is bound by residues 77-78 (AS), W103, T153, D173, and Q196. The residue at position 197 (K197) is an N6-(pyridoxal phosphate)lysine. 238–239 (NT) serves as a coordination point for pyridoxal 5'-phosphate.

The protein belongs to the class-V pyridoxal-phosphate-dependent aminotransferase family. SerC subfamily. As to quaternary structure, homodimer. Pyridoxal 5'-phosphate serves as cofactor.

Its subcellular location is the cytoplasm. It carries out the reaction O-phospho-L-serine + 2-oxoglutarate = 3-phosphooxypyruvate + L-glutamate. The catalysed reaction is 4-(phosphooxy)-L-threonine + 2-oxoglutarate = (R)-3-hydroxy-2-oxo-4-phosphooxybutanoate + L-glutamate. It participates in amino-acid biosynthesis; L-serine biosynthesis; L-serine from 3-phospho-D-glycerate: step 2/3. The protein operates within cofactor biosynthesis; pyridoxine 5'-phosphate biosynthesis; pyridoxine 5'-phosphate from D-erythrose 4-phosphate: step 3/5. Functionally, catalyzes the reversible conversion of 3-phosphohydroxypyruvate to phosphoserine and of 3-hydroxy-2-oxo-4-phosphonooxybutanoate to phosphohydroxythreonine. This Stutzerimonas stutzeri (Pseudomonas stutzeri) protein is Phosphoserine aminotransferase.